Here is a 219-residue protein sequence, read N- to C-terminus: UPF0502 protein Swoo_2055 (219 aa).

A disordered region spans residues 167-195 (QVKGESVPISEHSRSQREAPSKRQDEMDE). Residues 177–191 (EHSRSQREAPSKRQD) are compositionally biased toward basic and acidic residues.

Belongs to the UPF0502 family.

The protein is UPF0502 protein Swoo_2055 of Shewanella woodyi (strain ATCC 51908 / MS32).